We begin with the raw amino-acid sequence, 504 residues long: Crh-like protein CRH12 (504 aa).

A signal peptide spans 1–18 (MYKQILTFLILFLRYILS). In terms of domain architecture, GH16 spans 19–270 (EFPDDPYEDD…YSKALTYSYG (252 aa)). Asn34 is a glycosylation site (N-linked (GlcNAc...) asparagine). The cysteines at positions 43 and 51 are disulfide-linked. The active-site Nucleophile is the Glu138. Glu143 (proton donor) is an active-site residue. Position 143 (Glu143) interacts with chitin. A glycan (N-linked (GlcNAc...) asparagine) is linked at Asn161. Chitin-binding residues include Lys221, Trp225, and Thr234. The disordered stretch occupies residues 304–404 (KPTPKQETDD…LDISTQLPPL (101 aa)). Polar residues predominate over residues 316–329 (VLTSSKSQRVATTI). Residues 356–378 (WETEQDETGTDDTENSDNEEEES) are compositionally biased toward acidic residues. N-linked (GlcNAc...) asparagine glycans are attached at residues Asn407, Asn416, and Asn425. Gly479 is lipidated: GPI-anchor amidated glycine. Positions 480-504 (VSSILATSFSSVVIAEILVIVVLLL) are cleaved as a propeptide — removed in mature form.

This sequence belongs to the glycosyl hydrolase 16 family. CRH1 subfamily. Post-translationally, the GPI-anchor is attached to the protein in the endoplasmic reticulum and serves to target the protein to the cell surface. There, the glucosamine-inositol phospholipid moiety is cleaved off and the GPI-modified mannoprotein is covalently attached via its lipidless GPI glycan remnant to the 1,6-beta-glucan of the outer cell wall layer.

It localises to the secreted. It is found in the cell wall. The protein resides in the membrane. The catalysed reaction is Random endo-hydrolysis of N-acetyl-beta-D-glucosaminide (1-&gt;4)-beta-linkages in chitin and chitodextrins.. Functionally, dual chitinase/transglycosylase that plays a role in cell wall architecture. Chitinase and transglycosylase activities are coupled. Required for the polysaccharide cross-linking at the septa and the cell wall. More specifically, transfers chitin to 1,6-beta-glucan in the cell wall. Plays an important role in fungal pathogenesis via its functions in cell wall assembly and regeneration, filamentation, and adherence to host cells. The protein is Crh-like protein CRH12 (CRH12) of Candida albicans (strain SC5314 / ATCC MYA-2876) (Yeast).